Reading from the N-terminus, the 101-residue chain is Large ribosomal subunit protein eL43 (101 aa).

A C4-type zinc finger spans residues 40 to 62; the sequence is CPSCRSLVRLKRLAFGIWQCPKC.

The protein belongs to the eukaryotic ribosomal protein eL43 family. The cofactor is Zn(2+).

This is Large ribosomal subunit protein eL43 from Pyrobaculum islandicum (strain DSM 4184 / JCM 9189 / GEO3).